The following is a 110-amino-acid chain: Nucleotide-binding protein HI1146 homolog (110 aa).

This sequence belongs to the RapZ-like family.

Its function is as follows. Displays ATPase and GTPase activities. This Aggregatibacter actinomycetemcomitans (Actinobacillus actinomycetemcomitans) protein is Nucleotide-binding protein HI1146 homolog.